Here is a 41-residue protein sequence, read N- to C-terminus: Large ribosomal subunit protein bL36 (41 aa).

Belongs to the bacterial ribosomal protein bL36 family.

This is Large ribosomal subunit protein bL36 from Erythrobacter litoralis (strain HTCC2594).